The following is a 232-amino-acid chain: Large ribosomal subunit protein uL1 (232 aa).

It belongs to the universal ribosomal protein uL1 family. In terms of assembly, part of the 50S ribosomal subunit.

In terms of biological role, binds directly to 23S rRNA. The L1 stalk is quite mobile in the ribosome, and is involved in E site tRNA release. Its function is as follows. Protein L1 is also a translational repressor protein, it controls the translation of the L11 operon by binding to its mRNA. This chain is Large ribosomal subunit protein uL1, found in Dichelobacter nodosus (strain VCS1703A).